The sequence spans 312 residues: MEEECRVLSIQSHVIRGYVGNRAATFPLQVLGFEIDAVNSVQFSNHTGYAHWKGQVLNSDELQELYEGLRLNNMNKYDYVLTGYTRDKSFLAMVVDIVQELKQQNPRLVYVCDPVLGDKWDGEGSMYVPEDLLPVYKEKVVPLADIITPNQFEAELLSGRKIHSQEEALRVMDMLHSMGPDTVVITSSDLPSPQGSNYLIVLGSQRRRNPAGSVVMERIRMDIRKVDAVFVGTGDLFAAMLLAWTHKHPNNLKVACEKTVSTLHHVLQRTIQCAKAQAGEGVRPSPMQLELRMVQSKRDIEDPEIVVQATVL.

Met1 is subject to N-acetylmethionine. Pyridoxal-binding residues include Ser12 and Thr47. Residue Thr47 coordinates pyridoxal 5'-phosphate. A Phosphoserine modification is found at Ser59. Asp113 lines the ATP pocket. Asp113 is a binding site for Na(+). Asp118 contributes to the Mg(2+) binding site. Thr148 is a binding site for Na(+). Residue 150–153 (NQFE) coordinates ATP. Ser164 is modified (phosphoserine). Thr186 provides a ligand contact to Na(+). 186 to 187 (TS) is a binding site for ATP. Position 213 is a phosphoserine (Ser213). ATP contacts are provided by residues 226–228 (VDA) and Thr233. 234-235 (GD) contacts pyridoxal 5'-phosphate. Catalysis depends on Asp235, which acts as the Proton acceptor. Residue Ser285 is modified to Phosphoserine.

It belongs to the pyridoxine kinase family. In terms of assembly, homodimer. Mg(2+) is required as a cofactor. The cofactor is Zn(2+). Requires Co(2+) as cofactor. Mn(2+) serves as cofactor. As to expression, ubiquitous. Highly expressed in testis. In terms of tissue distribution, in adult testis and spermatozoa.

Its subcellular location is the cytoplasm. The protein resides in the cytosol. It carries out the reaction pyridoxal + ATP = pyridoxal 5'-phosphate + ADP + H(+). The catalysed reaction is pyridoxamine + ATP = pyridoxamine 5'-phosphate + ADP + H(+). The enzyme catalyses pyridoxine + ATP = pyridoxine 5'-phosphate + ADP + H(+). Its pathway is cofactor metabolism; pyridoxal 5'-phosphate salvage; pyridoxal 5'-phosphate from pyridoxal: step 1/1. It participates in cofactor metabolism; pyridoxal 5'-phosphate salvage; pyridoxine 5'-phosphate from pyridoxine: step 1/1. It functions in the pathway cofactor metabolism; pyridoxal 5'-phosphate salvage; pyridoxamine 5'-phosphate from pyridoxamine: step 1/1. Catalytic activity is inhibited competitively by 4-deoxypyridoxine, and is also inhibited by the benzodiazepine receptor ligands 1012S and ethyl-beta-carboline-3-carboxylate. Inhibited by ginkgotoxin, theophylline, lamotrigine, enprofylline, theobromine, and caffeine. Activity is increased in the presence of K(+)or Na(+). Its function is as follows. Catalyzes the phosphorylation of the dietary vitamin B6 vitamers pyridoxal (PL), pyridoxine (PN) and pyridoxamine (PM) to form pyridoxal 5'-phosphate (PLP), pyridoxine 5'-phosphate (PNP) and pyridoxamine 5'-phosphate (PMP), respectively. PLP is the active form of vitamin B6, and acts as a cofactor for over 140 different enzymatic reactions. This Homo sapiens (Human) protein is Pyridoxal kinase.